The following is a 265-amino-acid chain: Adenosylcobinamide-GDP ribazoletransferase (265 aa).

5 consecutive transmembrane segments (helical) span residues 59 to 79 (LSWILPIEISIILGMILSVLI), 113 to 133 (IGTFGSIGLILSLGLKYLLLV), 141 to 161 (WIFLFTSWFSHSASRWFALLL), 183 to 203 (LPPFDFALSTFFGCFPAVYFL), and 206 to 226 (FQNQIPNVLLGFFLSSIFVFY).

Belongs to the CobS family. It depends on Mg(2+) as a cofactor.

The protein resides in the cell inner membrane. The enzyme catalyses alpha-ribazole + adenosylcob(III)inamide-GDP = adenosylcob(III)alamin + GMP + H(+). The catalysed reaction is alpha-ribazole 5'-phosphate + adenosylcob(III)inamide-GDP = adenosylcob(III)alamin 5'-phosphate + GMP + H(+). Its pathway is cofactor biosynthesis; adenosylcobalamin biosynthesis; adenosylcobalamin from cob(II)yrinate a,c-diamide: step 7/7. Its function is as follows. Joins adenosylcobinamide-GDP and alpha-ribazole to generate adenosylcobalamin (Ado-cobalamin). Also synthesizes adenosylcobalamin 5'-phosphate from adenosylcobinamide-GDP and alpha-ribazole 5'-phosphate. This Leptospira interrogans serogroup Icterohaemorrhagiae serovar copenhageni (strain Fiocruz L1-130) protein is Adenosylcobinamide-GDP ribazoletransferase.